The chain runs to 412 residues: [Pyruvate dehydrogenase (acetyl-transferring)] kinase isozyme 4, mitochondrial (412 aa).

The Histidine kinase domain maps to 138 to 368; it reads IIEYKDSCTV…DAIIYLKALS (231 aa). ATP contacts are provided by residues 254 to 261, D293, 312 to 313, and 329 to 334; these read ELFKNAMR, ST, and GFGYGL.

This sequence belongs to the PDK/BCKDK protein kinase family. Homodimer. Interacts with the pyruvate dehydrogenase complex subunit DLAT, and is part of the multimeric pyruvate dehydrogenase complex that contains multiple copies of pyruvate dehydrogenase (E1), dihydrolipoamide acetyltransferase (DLAT, E2) and lipoamide dehydrogenase (DLD, E3). Detected in heart, white adipose tissue and muscle.

The protein resides in the mitochondrion matrix. It carries out the reaction L-seryl-[pyruvate dehydrogenase E1 alpha subunit] + ATP = O-phospho-L-seryl-[pyruvate dehydrogenase E1 alpha subunit] + ADP + H(+). In terms of biological role, kinase that plays a key role in regulation of glucose and fatty acid metabolism and homeostasis via phosphorylation of the pyruvate dehydrogenase subunits PDHA1 and PDHA2. This inhibits pyruvate dehydrogenase activity, and thereby regulates metabolite flux through the tricarboxylic acid cycle, down-regulates aerobic respiration and inhibits the formation of acetyl-coenzyme A from pyruvate. Inhibition of pyruvate dehydrogenase decreases glucose utilization and increases fat metabolism in response to prolonged fasting and starvation. Plays an important role in maintaining normal blood glucose levels under starvation, and is involved in the insulin signaling cascade. Via its regulation of pyruvate dehydrogenase activity, plays an important role in maintaining normal blood pH and in preventing the accumulation of ketone bodies under starvation. In the fed state, mediates cellular responses to glucose levels and to a high-fat diet. Regulates both fatty acid oxidation and de novo fatty acid biosynthesis. Plays a role in the generation of reactive oxygen species. Protects detached epithelial cells against anoikis. Plays a role in cell proliferation via its role in regulating carbohydrate and fatty acid metabolism. In Rhinolophus ferrumequinum (Greater horseshoe bat), this protein is [Pyruvate dehydrogenase (acetyl-transferring)] kinase isozyme 4, mitochondrial (PDK4).